The chain runs to 1114 residues: Lysylphosphatidylglycerol biosynthesis bifunctional protein LysX (1114 aa).

Positions 1–11 (MSASTETHHAS) are enriched in basic and acidic residues. The segment at 1 to 26 (MSASTETHHASEAAVPTAPRPRPGLG) is disordered. Positions 1–618 (MSASTETHHA…GLHSDGSAPG (618 aa)) are phosphatidylglycerol lysyltransferase. 6 helical membrane passes run 38–58 (IAGLILGVFSVLVFLWSISPV), 77–97 (APDTSLSWALVVALLAAALAS), 101–121 (IAWWLLTIYLVLFLITNVIVS), 126–146 (NVNAMAAAVVQVVLIGILIAA), 164–184 (GVLIVGLAIGTLLGWGLVELF), and 219–239 (FVNTLLGLFGAIALLAAVITL). The segment at 619–1114 (EGLAPTATGP…LAFPLAKPRQ (496 aa)) is lysine--tRNA ligase. The segment at residues 674-751 (VRIAGRLLRI…LSLLANEWRM (78 aa)) is a DNA-binding region (OB). Mg(2+)-binding residues include D1025 and E1032.

This sequence in the N-terminal section; belongs to the LPG synthetase family. It in the C-terminal section; belongs to the class-II aminoacyl-tRNA synthetase family. It depends on Mg(2+) as a cofactor.

The protein localises to the cell membrane. It catalyses the reaction tRNA(Lys) + L-lysine + ATP = L-lysyl-tRNA(Lys) + AMP + diphosphate. It carries out the reaction L-lysyl-tRNA(Lys) + a 1,2-diacyl-sn-glycero-3-phospho-(1'-sn-glycerol) = a 1,2-diacyl-sn-glycero-3-phospho-1'-(3'-O-L-lysyl)-sn-glycerol + tRNA(Lys). Its function is as follows. Catalyzes the production of L-lysyl-tRNA(Lys)transfer and the transfer of a lysyl group from L-lysyl-tRNA(Lys) to membrane-bound phosphatidylglycerol (PG), which produces lysylphosphatidylglycerol (LPG), one of the components of the bacterial membrane with a positive net charge. LPG synthesis contributes to the resistance to cationic antimicrobial peptides (CAMPs) and likely protects M.tuberculosis against the CAMPs produced by competiting microorganisms (bacteriocins). In fact, the modification of anionic phosphatidylglycerol with positively charged L-lysine results in repulsion of the peptides. The protein is Lysylphosphatidylglycerol biosynthesis bifunctional protein LysX (lysX) of Rhodococcus jostii (strain RHA1).